The chain runs to 69 residues: uncharacterized protein (69 aa).

An HTH cro/C1-type domain is found at 10–64; it reads IRAFRKLKGYTQEGFAKALGISVSILGEIERGNRLPSAAIIQDAADVLNISADEL. Positions 21-40 form a DNA-binding region, H-T-H motif; the sequence is QEGFAKALGISVSILGEIER.

This is an uncharacterized protein from Bacillus subtilis (strain 168).